Reading from the N-terminus, the 366-residue chain is S-adenosylmethionine decarboxylase proenzyme 1 (366 aa).

Active-site residues include glutamate 9 and glutamate 12. Glutamate 68 provides a ligand contact to substrate. Serine 69 functions as the Schiff-base intermediate with substrate; via pyruvic acid in the catalytic mechanism. Serine 69 carries the pyruvic acid (Ser); by autocatalysis modification. Cysteine 83 functions as the Proton donor; for catalytic activity in the catalytic mechanism. Catalysis depends on proton acceptor; for processing activity residues serine 233 and histidine 246. Glutamate 250 serves as a coordination point for substrate.

This sequence belongs to the eukaryotic AdoMetDC family. Pyruvate serves as cofactor. Is synthesized initially as an inactive proenzyme. Formation of the active enzyme involves a self-maturation process in which the active site pyruvoyl group is generated from an internal serine residue via an autocatalytic post-translational modification. Two non-identical subunits are generated from the proenzyme in this reaction, and the pyruvate is formed at the N-terminus of the alpha chain, which is derived from the carboxyl end of the proenzyme. The post-translation cleavage follows an unusual pathway, termed non-hydrolytic serinolysis, in which the side chain hydroxyl group of the serine supplies its oxygen atom to form the C-terminus of the beta chain, while the remainder of the serine residue undergoes an oxidative deamination to produce ammonia and the pyruvoyl group blocking the N-terminus of the alpha chain.

The catalysed reaction is S-adenosyl-L-methionine + H(+) = S-adenosyl 3-(methylsulfanyl)propylamine + CO2. It participates in amine and polyamine biosynthesis; S-adenosylmethioninamine biosynthesis; S-adenosylmethioninamine from S-adenosyl-L-methionine: step 1/1. Essential for biosynthesis of the polyamines spermidine and spermine. Essential for polyamine homeostasis, and normal plant embryogenesis, growth and development. This is S-adenosylmethionine decarboxylase proenzyme 1 from Arabidopsis thaliana (Mouse-ear cress).